The sequence spans 434 residues: UDP-N-acetylmuramoylalanine--D-glutamate ligase (434 aa).

126-132 (GTSGKTT) contacts ATP.

This sequence belongs to the MurCDEF family.

The protein resides in the cytoplasm. The catalysed reaction is UDP-N-acetyl-alpha-D-muramoyl-L-alanine + D-glutamate + ATP = UDP-N-acetyl-alpha-D-muramoyl-L-alanyl-D-glutamate + ADP + phosphate + H(+). It participates in cell wall biogenesis; peptidoglycan biosynthesis. Functionally, cell wall formation. Catalyzes the addition of glutamate to the nucleotide precursor UDP-N-acetylmuramoyl-L-alanine (UMA). This Desulfovibrio desulfuricans (strain ATCC 27774 / DSM 6949 / MB) protein is UDP-N-acetylmuramoylalanine--D-glutamate ligase.